We begin with the raw amino-acid sequence, 84 residues long: HPTKPCMYCSFGQCVGPHICCGPTGCEMGTAEANMCSEEDEDPIPCQVFGSDCALNNPDNIHGHCVADGICCVDDTCTTHLGCL.

7 cysteine pairs are disulfide-bonded: C6/C46, C9/C20, C14/C36, C21/C26, C53/C71, C65/C83, and C72/C77.

As to expression, expressed by the venom duct.

It is found in the secreted. Its function is as follows. Targets vasopressin-oxytocin related receptors. No effect observed when injected into goldfish or into mice. This chain is Conophysin-R, found in Conus radiatus (Rayed cone).